Here is a 357-residue protein sequence, read N- to C-terminus: 4-hydroxyphenylpyruvate dioxygenase (357 aa).

VOC domains lie at 12–129 (GFEF…LIDR) and 158–313 (IIDH…IFSE). Residues His-161, His-240, and Glu-322 each contribute to the Fe cation site.

This sequence belongs to the 4HPPD family. As to quaternary structure, homotetramer. Fe cation is required as a cofactor.

It carries out the reaction 3-(4-hydroxyphenyl)pyruvate + O2 = homogentisate + CO2. The protein operates within amino-acid degradation; L-phenylalanine degradation; acetoacetate and fumarate from L-phenylalanine: step 3/6. The polypeptide is 4-hydroxyphenylpyruvate dioxygenase (hpd) (Pseudomonas sp. (strain P.J. 874)).